Reading from the N-terminus, the 598-residue chain is Transcription factor COE3 (598 aa).

Residues 1–23 (MFGIQENIPRGGTTMKEEPLGGG) form a disordered region. Positions 63-66 (RKSN) are interaction with DNA. The C5-type zinc-finger motif lies at 151–170 (CRVLLTHEIMCSRCCDKKSC). Interaction with DNA stretches follow at residues 197 to 204 (NCLKNAGN) and 236 to 239 (NNSK). The region spanning 264–347 (PCIKAISPSE…KGAPGRFVYT (84 aa)) is the IPT/TIG domain. Positions 452-483 (TSQANDQVGYSRNTSSVSPRGYVPSSTPQQSN) are disordered.

This sequence belongs to the COE family. Forms either a homodimer or a heterodimer with a related family member.

Its subcellular location is the nucleus. In terms of biological role, acts as a transcriptional activator. The chain is Transcription factor COE3 (coe3) from Xenopus laevis (African clawed frog).